We begin with the raw amino-acid sequence, 166 residues long: UPF0304 protein VV1_2093 (166 aa).

Belongs to the UPF0304 family.

The chain is UPF0304 protein VV1_2093 from Vibrio vulnificus (strain CMCP6).